Here is a 542-residue protein sequence, read N- to C-terminus: CTP synthase (542 aa).

The segment at 1–265 (MARYVFITGG…DSEVLAAFGI (265 aa)) is amidoligase domain. Serine 13 provides a ligand contact to CTP. Serine 13 contacts UTP. An ATP-binding site is contributed by 14-19 (SLGKGI). L-glutamine is bound at residue tyrosine 54. Position 71 (aspartate 71) interacts with ATP. Residues aspartate 71 and glutamate 139 each coordinate Mg(2+). CTP-binding positions include 146-148 (DIE), 186-191 (KTKPTQ), and lysine 222. UTP contacts are provided by residues 186 to 191 (KTKPTQ) and lysine 222. The Glutamine amidotransferase type-1 domain occupies 291–541 (TIAIVGKYTG…IAAAVEQSRL (251 aa)). Glycine 353 contacts L-glutamine. Cysteine 380 (nucleophile; for glutamine hydrolysis) is an active-site residue. L-glutamine contacts are provided by residues 381 to 384 (FGMQ), glutamate 404, and arginine 469. Catalysis depends on residues histidine 514 and glutamate 516.

Belongs to the CTP synthase family. Homotetramer.

It carries out the reaction UTP + L-glutamine + ATP + H2O = CTP + L-glutamate + ADP + phosphate + 2 H(+). It catalyses the reaction L-glutamine + H2O = L-glutamate + NH4(+). The enzyme catalyses UTP + NH4(+) + ATP = CTP + ADP + phosphate + 2 H(+). The protein operates within pyrimidine metabolism; CTP biosynthesis via de novo pathway; CTP from UDP: step 2/2. Its activity is regulated as follows. Allosterically activated by GTP, when glutamine is the substrate; GTP has no effect on the reaction when ammonia is the substrate. The allosteric effector GTP functions by stabilizing the protein conformation that binds the tetrahedral intermediate(s) formed during glutamine hydrolysis. Inhibited by the product CTP, via allosteric rather than competitive inhibition. Its function is as follows. Catalyzes the ATP-dependent amination of UTP to CTP with either L-glutamine or ammonia as the source of nitrogen. Regulates intracellular CTP levels through interactions with the four ribonucleotide triphosphates. The chain is CTP synthase from Chelativorans sp. (strain BNC1).